We begin with the raw amino-acid sequence, 173 residues long: Putative C-type lectin protein FPV198 (173 aa).

Positions 50-169 (GMSGWVQINN…CNKKHTGICF (120 aa)) constitute a C-type lectin domain.

The polypeptide is Putative C-type lectin protein FPV198 (Vertebrata (FPV)).